A 390-amino-acid chain; its full sequence is MATNGEIFNTYGHNRQTATVTKITASNESSNGVCYLSETANLGKLICIPMALRAAMELNVFQLISKFGTDAKVSASEIASKMPNAKNNPEAAMYLDRILRLLGASSILSVSTTKKSINRGGDDVVVHEKLYGLTNSSCCLVPRQEDGVSLVEELLFTSDKVVVDSFFKLKCVVEEKDSVPFEVAHGAKIFEYAATEPRMNQVFNDGMAVFSIVVFEAVFRFYDGFLDMKELLDVGGGIGTSVSKIVAKYPLIRGVNFDLPHVISVAPQYPGVEHVAGDMFEEVPKGQNMLLKWVLHDWGDERCVKLLKNCWNSLPVGGKVLIIEFVLPNELGNNAESFNALIPDLLLMALNPGGKERTISEYDDLGKAAGFIKTIPIPISNGLHVIEFHK.

Glu153 lines the substrate pocket. Residues Met207, Ser211, Gly235, Asp258, 278–279, and Lys292 each bind S-adenosyl-L-methionine; that span reads DM. His296 serves as the catalytic Proton acceptor. Residue 296–297 coordinates substrate; sequence HD.

This sequence belongs to the class I-like SAM-binding methyltransferase superfamily. Cation-independent O-methyltransferase family. COMT subfamily. Homodimer. As to expression, highly expressed in capsules. Expressed is stems. Expressed at low levels in roots.

The catalysed reaction is (S)-scoulerine + S-adenosyl-L-methionine = (S)-tetrahydrocolumbamine + S-adenosyl-L-homocysteine + H(+). It catalyses the reaction (S)-tetrahydrocolumbamine + S-adenosyl-L-methionine = (S)-tetrahydropalmatine + S-adenosyl-L-homocysteine + H(+). It carries out the reaction (S)-norreticuline + S-adenosyl-L-methionine = (S)-norcodamine + S-adenosyl-L-homocysteine + H(+). The enzyme catalyses (S)-reticuline + S-adenosyl-L-methionine = (S)-codamine + S-adenosyl-L-homocysteine + H(+). The protein operates within alkaloid biosynthesis. Functionally, methyltransferase involved in the biosynthesis of the benzylisoquinoline alkaloid noscapine. Catalyzes the conversion of (S)-scoulerine to (S)-tetrahydrocolumbamine. Can convert (S)-tetrahydrocolumbamine to tetrahydropalmatine. Can convert (S)-norreticuline to (S)-norcodamine. Can convert (S)-reticuline to (S)-codamine. Substrate preference is (S)-scoulerine &gt; (S)-tetrahydrocolumbamine &gt; (S)-norreticuline &gt; (S)-reticuline. This is Scoulerine-9-O-methyltransferase 1 from Papaver somniferum (Opium poppy).